Consider the following 371-residue polypeptide: Phospho-N-acetylmuramoyl-pentapeptide-transferase (371 aa).

Helical transmembrane passes span 21–41, 46–66, 92–112, 119–139, 156–176, 182–202, 216–236, 241–261, 268–288, 296–316, and 349–369; these read NHIL…DFYY, LTIP…IGIP, PTMG…ILYF, IILT…IDDF, ILLQ…NNLI, IANK…FVLL, GLLS…ILIE, NSTL…FLFL, LFMG…IALI, LIMG…VSIF, and IVSS…IFLI.

This sequence belongs to the glycosyltransferase 4 family. MraY subfamily. Mg(2+) is required as a cofactor.

The protein resides in the cell inner membrane. It catalyses the reaction UDP-N-acetyl-alpha-D-muramoyl-L-alanyl-gamma-D-glutamyl-meso-2,6-diaminopimeloyl-D-alanyl-D-alanine + di-trans,octa-cis-undecaprenyl phosphate = di-trans,octa-cis-undecaprenyl diphospho-N-acetyl-alpha-D-muramoyl-L-alanyl-D-glutamyl-meso-2,6-diaminopimeloyl-D-alanyl-D-alanine + UMP. The protein operates within cell wall biogenesis; peptidoglycan biosynthesis. Functionally, catalyzes the initial step of the lipid cycle reactions in the biosynthesis of the cell wall peptidoglycan: transfers peptidoglycan precursor phospho-MurNAc-pentapeptide from UDP-MurNAc-pentapeptide onto the lipid carrier undecaprenyl phosphate, yielding undecaprenyl-pyrophosphoryl-MurNAc-pentapeptide, known as lipid I. This chain is Phospho-N-acetylmuramoyl-pentapeptide-transferase, found in Prochlorococcus marinus (strain NATL2A).